The chain runs to 148 residues: Large ribosomal subunit protein bL19 (148 aa).

This sequence belongs to the bacterial ribosomal protein bL19 family.

In terms of biological role, this protein is located at the 30S-50S ribosomal subunit interface and may play a role in the structure and function of the aminoacyl-tRNA binding site. The protein is Large ribosomal subunit protein bL19 of Paramagnetospirillum magneticum (strain ATCC 700264 / AMB-1) (Magnetospirillum magneticum).